The chain runs to 403 residues: D-mannonate dehydratase Caul1427 (403 aa).

Residues Asn-38 and His-123 each coordinate substrate. Tyr-160 (proton donor/acceptor) is an active-site residue. Asp-211 serves as a coordination point for Mg(2+). His-213 acts as the Proton donor/acceptor in catalysis. Residues Glu-237 and Glu-263 each contribute to the Mg(2+) site. Residues Glu-263, Arg-284, His-313, Asp-317, and Glu-340 each coordinate substrate.

This sequence belongs to the mandelate racemase/muconate lactonizing enzyme family. GalD subfamily. The cofactor is Mg(2+).

It carries out the reaction D-mannonate = 2-dehydro-3-deoxy-D-gluconate + H2O. It participates in carbohydrate metabolism; pentose and glucuronate interconversion. Its function is as follows. Catalyzes the dehydration of D-mannonate. Has no detectable activity with a panel of 70 other acid sugars (in vitro). The protein is D-mannonate dehydratase Caul1427 of Caulobacter sp. (strain K31).